Reading from the N-terminus, the 229-residue chain is MLICVPGILSKDDVAEFRHIMAESDWEDGRSTAGAQSAMVKRNEQLPPDSEVARRLGHRIISAMTANPRFLAAAIPQQIFPPLFNRYAADAGHQFGIHVDNAVRGDKLTGLRIRTDLSVTLFLSEPDEYDGGELVIEDLYGSHEVKLPAGDLVLYPASSLHMVTPVTRGVRVASFFWLQSMIRDPLARSMIFDLDTTIQGLSQRMGRDDPEMVRLTGLYHNLIRYWAET.

The 103-residue stretch at 78 to 180 (QIFPPLFNRY…RVASFFWLQS (103 aa)) folds into the Fe2OG dioxygenase domain. The Fe cation site is built by His-98, Asp-100, and His-161. Arg-171 lines the 2-oxoglutarate pocket.

Fe(2+) serves as cofactor. L-ascorbate is required as a cofactor.

The protein is PKHD-type hydroxylase BRADO6316 of Bradyrhizobium sp. (strain ORS 278).